Here is a 225-residue protein sequence, read N- to C-terminus: PKHD-type hydroxylase YbiX (225 aa).

The Fe2OG dioxygenase domain maps to 78–177; it reads TLSTPLFNRY…RVASFMWIQS (100 aa). Residues histidine 96, aspartate 98, and histidine 158 each coordinate Fe cation. Arginine 168 is a 2-oxoglutarate binding site.

Fe(2+) is required as a cofactor. Requires L-ascorbate as cofactor.

This chain is PKHD-type hydroxylase YbiX, found in Escherichia fergusonii (strain ATCC 35469 / DSM 13698 / CCUG 18766 / IAM 14443 / JCM 21226 / LMG 7866 / NBRC 102419 / NCTC 12128 / CDC 0568-73).